We begin with the raw amino-acid sequence, 1686 residues long: Thrombospondin type-1 domain-containing protein 7A (1686 aa).

A signal peptide spans 1–36 (MGLASRAPGKGGTSAGALASLFRVALLFFGLWDVQT). The Extracellular portion of the chain corresponds to 37–1635 (QTVANTRPTY…FGPDGKLKTW (1599 aa)). TSP type-1 domains lie at 44–103 (PTYI…RVCD), 107–181 (ELYD…IPCP), and 183–236 (DCVV…GKCE). A glycan (N-linked (GlcNAc...) asparagine) is linked at N223. Residues 257–321 (IRQARDTGEA…EKKRMRDPET (65 aa)) form a disordered region. Basic and acidic residues-rich tracts occupy residues 259 to 272 (QARDTGEARVPKAE) and 294 to 321 (EKKELRESKGERVRERVKEKKRMRDPET). TSP type-1 domains are found at residues 385-441 (DCEV…SPQG), 448-535 (VVYN…IPCP), 537-596 (ECEV…PSCY), 656-717 (DCVL…HPCT), 718-797 (VYHW…LPCK), 799-859 (DCVV…SVCP), 860-932 (GYRW…LPCQ), 934-985 (DCQL…QYCP), 988-1061 (KYNA…IPCP), 1063-1123 (DCKL…SDCS), 1124-1191 (QYVW…LPCP), 1193-1247 (DCVL…SNCF), 1248-1311 (HYSY…VECP), 1313-1368 (NCQL…KPCF), 1369-1439 (SWRY…VPCP), and 1441-1502 (ECYL…GQCY). Intrachain disulfides connect C460-C530, C480-C534, and C491-C519. N-linked (GlcNAc...) asparagine glycosylation occurs at N475. N-linked (GlcNAc...) asparagine glycosylation is present at N525. 2 disulfide bridges follow: C657–C699 and C668–C672. An N-linked (GlcNAc...) asparagine glycan is attached at N701. Intrachain disulfides connect C711–C716, C729–C792, C756–C796, C767–C780, C800–C842, C811–C815, and C852–C858. A glycan (N-linked (GlcNAc...) asparagine) is linked at N739. N-linked (GlcNAc...) asparagine glycosylation is present at N996. 6 disulfides stabilise this stretch: C1000-C1056, C1022-C1060, C1033-C1046, C1064-C1101, C1075-C1079, and C1118-C1122. N-linked (GlcNAc...) asparagine glycosylation occurs at N1071. N1212 carries N-linked (GlcNAc...) asparagine glycosylation. C1240 and C1246 are oxidised to a cystine. N1252 carries N-linked (GlcNAc...) asparagine glycosylation. Intrachain disulfides connect C1259–C1306, C1267–C1310, C1278–C1291, C1314–C1352, C1325–C1329, C1362–C1367, C1378–C1434, C1385–C1438, C1396–C1415, C1442–C1486, C1453–C1457, and C1496–C1501. N1303 carries N-linked (GlcNAc...) asparagine glycosylation. N-linked (GlcNAc...) asparagine glycosylation occurs at N1393. N1527 is a glycosylation site (N-linked (GlcNAc...) asparagine). The helical transmembrane segment at 1636-1656 (VYGVAAGAFVLLVFIVSMTYL) threads the bilayer. Topologically, residues 1657-1686 (ACKKPKKPQRRQMNNRLKPLTLAYDGDADM) are cytoplasmic.

In terms of processing, extensively N-glycosylated.

The protein resides in the cell membrane. It is found in the cell projection. In terms of biological role, required for normal sprouting angiogenesis and normal embryonic development of intersegmental vessels (ISV). Required for normal function of the glomerular filtration barrier. Required for normal axon outgrowth on embryonic motor neurons at the level of the horizontal myoseptum. Required for normal expression of notch1b, suggesting that its functions in angiogenesis and neuron outgrowth are due to decreased expression of notch1b. Plays a role in actin cytoskeleton rearrangement. The polypeptide is Thrombospondin type-1 domain-containing protein 7A (Danio rerio (Zebrafish)).